We begin with the raw amino-acid sequence, 312 residues long: 26S proteasome non-ATPase regulatory subunit 14 (312 aa).

Positions valine 33–glutamine 168 constitute an MPN domain. Zn(2+) is bound by residues histidine 115, histidine 117, and aspartate 128. The short motif at histidine 115–aspartate 128 is the JAMM motif element.

Belongs to the peptidase M67A family. PSMD14 subfamily. In terms of assembly, component of the 19S regulatory cap of the 26S proteasome.

Functionally, metalloprotease component of the 26S proteasome that specifically cleaves 'Lys-63'-linked polyubiquitin chains. The 26S proteasome is involved in the ATP-dependent degradation of ubiquitinated proteins. The function of the 'Lys-63'-specific deubiquitination of the proteasome is unclear. The polypeptide is 26S proteasome non-ATPase regulatory subunit 14 (rpn-11) (Caenorhabditis elegans).